Consider the following 117-residue polypeptide: Putative membrane protein insertion efficiency factor (117 aa).

Belongs to the UPF0161 family.

It is found in the cell inner membrane. In terms of biological role, could be involved in insertion of integral membrane proteins into the membrane. The protein is Putative membrane protein insertion efficiency factor of Bartonella henselae (strain ATCC 49882 / DSM 28221 / CCUG 30454 / Houston 1) (Rochalimaea henselae).